Consider the following 291-residue polypeptide: 3-hydroxy-5-phosphonooxypentane-2,4-dione thiolase (291 aa).

The active-site Schiff-base intermediate with substrate is Lys-203.

This sequence belongs to the DeoC/FbaB aldolase family. Homodecamer.

The protein localises to the cytoplasm. It carries out the reaction dihydroxyacetone phosphate + acetyl-CoA = 3-hydroxy-2,4-dioxopentyl phosphate + CoA. In terms of biological role, involved in the degradation of phospho-AI-2, thereby terminating induction of the lsr operon and closing the AI-2 signaling cycle. Catalyzes the transfer of an acetyl moiety from 3-hydroxy-5-phosphonooxypentane-2,4-dione to CoA to form glycerone phosphate and acetyl-CoA. The sequence is that of 3-hydroxy-5-phosphonooxypentane-2,4-dione thiolase from Yersinia pestis bv. Antiqua (strain Antiqua).